Consider the following 199-residue polypeptide: 7-methyl-GTP pyrophosphatase (199 aa).

The active-site Proton acceptor is D76.

Belongs to the Maf family. YceF subfamily. A divalent metal cation is required as a cofactor.

Its subcellular location is the cytoplasm. The enzyme catalyses N(7)-methyl-GTP + H2O = N(7)-methyl-GMP + diphosphate + H(+). Functionally, nucleoside triphosphate pyrophosphatase that hydrolyzes 7-methyl-GTP (m(7)GTP). May have a dual role in cell division arrest and in preventing the incorporation of modified nucleotides into cellular nucleic acids. The chain is 7-methyl-GTP pyrophosphatase from Mesorhizobium japonicum (strain LMG 29417 / CECT 9101 / MAFF 303099) (Mesorhizobium loti (strain MAFF 303099)).